A 242-amino-acid polypeptide reads, in one-letter code: Alpha-aspartyl dipeptidase (242 aa).

Residues serine 125, aspartate 140, and histidine 162 each act as charge relay system in the active site.

The protein belongs to the peptidase S51 family.

Its subcellular location is the cytoplasm. It carries out the reaction Dipeptidase E catalyzes the hydrolysis of dipeptides Asp-|-Xaa. It does not act on peptides with N-terminal Glu, Asn or Gln, nor does it cleave isoaspartyl peptides.. Its function is as follows. Hydrolyzes dipeptides containing N-terminal aspartate residues. The polypeptide is Alpha-aspartyl dipeptidase (aad-a) (Xenopus laevis (African clawed frog)).